Reading from the N-terminus, the 185-residue chain is MVNSCCGSVCSDQGCGQDLCQETCCCPSCCQTTCCRTTCYRPSYSVSCCCRPQCCQSVCCQPTCCRPSCCVSSCCKPQCCQSVCCQPTCCHPSCCISSCCRPSCCVSSCCKPQCCQSVCCQPNCCRPSCSISSCCRPSCCESSCCRPCCCLRPVCGRVSCHTTCYRPACVISTCPRPVCCASSCC.

Tandem repeats lie at residues 14–18 (GCGQD), 19–23 (LCQET), 24–28 (CCCPS), 39–43 (CYRPS), 44–48 (YSVSC), 49–53 (CCRPQ), 54–58 (CCQSV), 59–63 (CCQPT), 64–68 (CCRPS), 69–73 (CCVSS), 74–78 (CCKPQ), 79–83 (CCQSV), 84–88 (CCQPT), 89–93 (CCHPS), 94–98 (CCISS), 99–103 (CCRPS), 104–108 (CCVSS), 109–113 (CCKPQ), 114–118 (CCQSV), 119–123 (CCQPN), 124–128 (CCRPS), 134–138 (CCRPS), 139–143 (CCESS), 144–148 (CCRPC), and 149–164 (CCLRPVCGRVSCHTTC). Residues 14 to 164 (GCGQDLCQET…CGRVSCHTTC (151 aa)) are 25 X 5 AA repeats of C-C-[IKRQVHEC]-[SPRT]-[STCVQPR].

The protein belongs to the KRTAP type 4 family. Interacts with hair keratins. In terms of tissue distribution, expressed in the hair follicles.

Its function is as follows. In the hair cortex, hair keratin intermediate filaments are embedded in an interfilamentous matrix, consisting of hair keratin-associated proteins (KRTAP), which are essential for the formation of a rigid and resistant hair shaft through their extensive disulfide bond cross-linking with abundant cysteine residues of hair keratins. The matrix proteins include the high-sulfur and high-glycine-tyrosine keratins. The polypeptide is Keratin-associated protein 4-8 (KRTAP4-8) (Homo sapiens (Human)).